We begin with the raw amino-acid sequence, 119 residues long: Large ribosomal subunit protein bL20 (119 aa).

It belongs to the bacterial ribosomal protein bL20 family.

Binds directly to 23S ribosomal RNA and is necessary for the in vitro assembly process of the 50S ribosomal subunit. It is not involved in the protein synthesizing functions of that subunit. The protein is Large ribosomal subunit protein bL20 of Gluconacetobacter diazotrophicus (strain ATCC 49037 / DSM 5601 / CCUG 37298 / CIP 103539 / LMG 7603 / PAl5).